The chain runs to 265 residues: Tryptophan synthase alpha chain (265 aa).

Catalysis depends on proton acceptor residues Glu-45 and Asp-56.

The protein belongs to the TrpA family. Tetramer of two alpha and two beta chains.

The catalysed reaction is (1S,2R)-1-C-(indol-3-yl)glycerol 3-phosphate + L-serine = D-glyceraldehyde 3-phosphate + L-tryptophan + H2O. Its pathway is amino-acid biosynthesis; L-tryptophan biosynthesis; L-tryptophan from chorismate: step 5/5. Functionally, the alpha subunit is responsible for the aldol cleavage of indoleglycerol phosphate to indole and glyceraldehyde 3-phosphate. The polypeptide is Tryptophan synthase alpha chain (Halalkalibacterium halodurans (strain ATCC BAA-125 / DSM 18197 / FERM 7344 / JCM 9153 / C-125) (Bacillus halodurans)).